The sequence spans 947 residues: Serine-aspartate repeat-containing protein C (947 aa).

An N-terminal signal peptide occupies residues 1–50; the sequence is MNNKKTATNRKGMIPNRLNKFSIRKYSVGTASILVGTTLIFGLSGHEAKA. Residues 21–32 carry the YSIRK-G/S signaling motif motif; sequence FSIRKYSVGTAS. The disordered stretch occupies residues 51–164; it reads AEHTNGELNQ…STTPKTTTIK (114 aa). The ligand binding A region stretch occupies residues 51–495; sequence AEHTNGELNQ…GSSTANGDQK (445 aa). A compositionally biased stretch (polar residues) spans 56–71; sequence GELNQSKNETTAPSEN. Residues 72–83 show a composition bias toward basic and acidic residues; that stretch reads KTTKKVDSRQLK. A compositionally biased stretch (polar residues) spans 84–155; that stretch reads DNTQTATADQ…SNLTQAKDVS (72 aa). CNA-B domains follow at residues 496–606 and 607–717; these read KYNL…YKTP and KYSL…EEET. The tract at residues 678–927 is disordered; sequence TQTGTNTTED…NNSNNGTLFG (250 aa). Composition is skewed to acidic residues over residues 685-695 and 712-886; these read TEDDKDADGGE and YYEE…DSDS. Residues 910–914 carry the LPXTG sorting signal motif; that stretch reads LPETG. Residues 912–927 show a composition bias toward low complexity; the sequence is ETGSENNNSNNGTLFG. A Pentaglycyl murein peptidoglycan amidated threonine modification is found at T913. Residues 914-947 constitute a propeptide, removed by sortase; it reads GSENNNSNNGTLFGGLFAALGSLLLFGRRKKQNK.

The protein belongs to the serine-aspartate repeat-containing protein (SDr) family. In terms of assembly, homodimerizes; via N2-Domain. Interacts with host NRXN1; this interaction mediates bacterial attachment to host cells.

The protein resides in the secreted. Its subcellular location is the cell wall. Its function is as follows. Cell surface-associated calcium-binding protein which plays an important role in adhesion and pathogenesis. Mediates interactions with components of the extracellular matrix such as host NRXN1 to promote bacterial adhesion. This is Serine-aspartate repeat-containing protein C (sdrC) from Staphylococcus aureus (strain Newman).